The sequence spans 700 residues: Glutamine synthetase (700 aa).

In terms of domain architecture, GS beta-grasp spans 65–155 (YHFTPPGSSP…LPTAFCSYGG (91 aa)). The GS catalytic domain maps to 159 to 589 (DRDSLLRSME…TMQEMIRKDL (431 aa)). Residues Glu196, Glu198, Glu267, and Glu274 each coordinate Mg(2+). L-glutamate contacts are provided by residues 318 to 319 (NG) and Gly319. Residue His323 coordinates Mg(2+). Residues Ser327 and Arg435 each contribute to the ATP site. Arg435 contributes to the L-glutamate binding site. Glu472 lines the Mg(2+) pocket.

This sequence belongs to the glutamine synthetase family. Homohexamer. Mg(2+) serves as cofactor.

Its subcellular location is the cytoplasm. It carries out the reaction L-glutamate + NH4(+) + ATP = L-glutamine + ADP + phosphate + H(+). The activity of this enzyme is not controlled by adenylation. Its function is as follows. Catalyzes the ATP-dependent biosynthesis of glutamine from glutamate and ammonia. The protein is Glutamine synthetase of Butyrivibrio fibrisolvens.